The chain runs to 602 residues: uncharacterized protein (602 aa).

This sequence belongs to the glycosyltransferase 2 family.

This is an uncharacterized protein from Rickettsia felis (strain ATCC VR-1525 / URRWXCal2) (Rickettsia azadi).